Consider the following 3103-residue polypeptide: Extracellular matrix protein 3 (3103 aa).

The N-terminal stretch at 1 to 19 is a signal peptide; sequence MASALLCFLAAILPGMIAA. The Extracellular portion of the chain corresponds to 20–3047; that stretch reads QNTWVLGTSD…TYELAPKGTN (3028 aa). 12 CSPG repeats span residues 289–388, 411–499, 520–630, 656–762, 784–875, 901–993, 1022–1124, 1145–1238, 1259–1357, 1378–1470, 1490–1579, and 1613–1710; these read PPSL…LEIV, APVV…FRMT, APIV…FRVV, PPEM…FVVQ, QPPT…LEIT, LPPG…LTLS, APNV…FRCT, EEPQ…VLLT, TPRL…FDIT, VHPS…FQVT, KEPV…FIVT, and APQI…VEVR. Asn-330 and Asn-453 each carry an N-linked (GlcNAc...) asparagine glycan. N-linked (GlcNAc...) asparagine glycans are attached at residues Asn-989, Asn-1024, Asn-1042, Asn-1207, Asn-1294, Asn-1321, and Asn-1327. 5 N-linked (GlcNAc...) asparagine glycosylation sites follow: Asn-1542, Asn-1674, Asn-1679, Asn-1725, and Asn-1739. 4 consecutive Calx-beta domains span residues 1717–1816, 1829–1942, 1956–2062, and 2077–2179; these read LPNQ…IILH, AVVT…VKLS, NVII…LVLN, and ITIN…LVLG. 5 N-linked (GlcNAc...) asparagine glycosylation sites follow: Asn-2080, Asn-2195, Asn-2274, Asn-2385, and Asn-2932. Residues 2197–2302 enclose the Calx-beta 5 domain; it reads TVVTVHDVGD…MREAFTLHIT (106 aa). The tract at residues 2983–3013 is disordered; that stretch reads SSGIGKRETEHHAISSRQRRQANSEALVDPA. The chain crosses the membrane as a helical span at residues 3048–3068; the sequence is VVMIAVVIGVILIILLVALVI. Over 3069–3103 the chain is Cytoplasmic; sequence GVVVRRRQAKQQPVVVVNGSAKVVSNVHFDDNTEV.

Belongs to the FRAS1 family. As to expression, component of extracellular matrix fibers that interact with PMC filopodia during gastrulation (at protein level).

Its subcellular location is the cell membrane. Its function is as follows. Extracellular matrix protein that may serve as substrate for the migratory primary mesenchyme cells (PMCs), the interaction possibly providing guidance information to migrating PMCs. In Lytechinus variegatus (Green sea urchin), this protein is Extracellular matrix protein 3 (ECM3).